A 418-amino-acid polypeptide reads, in one-letter code: Flavin-dependent L-tryptophan oxidase VioA (418 aa).

Mg(2+) is bound at residue Gly13. Ser15 serves as a coordination point for FAD. Gly16 is a Mg(2+) binding site. Residues Asp38, Arg46, and Arg64 each coordinate FAD. Substrate contacts are provided by Arg64 and His163. Position 208 (Leu208) interacts with FAD. Ala240 serves as a coordination point for Mg(2+). Substrate is bound at residue Tyr309. Met398 is an FAD binding site.

Belongs to the flavin monoamine oxidase family. In terms of assembly, homodimer. It depends on FAD as a cofactor. The cofactor is Mg(2+).

It carries out the reaction L-tryptophan + O2 = 2-iminio-3-(indol-3-yl)propanoate + H2O2. The enzyme catalyses 7-chloro-L-tryptophan + O2 = 3-(7-chloroindol-3-yl)-2-iminopropanoate + H2O2. Its pathway is pigment biosynthesis; violacein biosynthesis. Its function is as follows. The enzyme generates the imine form of indole 3-pyruvate (IPA) from L-tryptophan (L-Trp), with concomitant two-electron reduction of O(2) to H(2)O(2). The polypeptide is Flavin-dependent L-tryptophan oxidase VioA (vioA) (Chromobacterium violaceum (strain ATCC 12472 / DSM 30191 / JCM 1249 / CCUG 213 / NBRC 12614 / NCIMB 9131 / NCTC 9757 / MK)).